Reading from the N-terminus, the 430-residue chain is Adenylosuccinate synthetase (430 aa).

Residues 12–18 (GDEGKGK) and 40–42 (GHT) each bind GTP. The active-site Proton acceptor is the Asp13. Mg(2+) contacts are provided by Asp13 and Gly40. IMP-binding positions include 13-16 (DEGK), 38-41 (NAGH), Thr130, Arg144, Gln224, Thr239, and Arg303. Residue His41 is the Proton donor of the active site. 299 to 305 (VVTGRKR) is a substrate binding site. Residues Arg305, 331–333 (KLD), and 413–415 (STS) each bind GTP.

It belongs to the adenylosuccinate synthetase family. Homodimer. It depends on Mg(2+) as a cofactor.

It localises to the cytoplasm. It carries out the reaction IMP + L-aspartate + GTP = N(6)-(1,2-dicarboxyethyl)-AMP + GDP + phosphate + 2 H(+). It functions in the pathway purine metabolism; AMP biosynthesis via de novo pathway; AMP from IMP: step 1/2. Functionally, plays an important role in the de novo pathway of purine nucleotide biosynthesis. Catalyzes the first committed step in the biosynthesis of AMP from IMP. In Methylobacterium nodulans (strain LMG 21967 / CNCM I-2342 / ORS 2060), this protein is Adenylosuccinate synthetase.